Reading from the N-terminus, the 210-residue chain is Tumor protein D53 homolog (210 aa).

A coiled-coil region spans residues 22-73; that stretch reads VTDVDFTSMISEEEKEELKAELAKLEDEISTLRQVLAAKEKHLIEIKQKLGM. Residues 185–197 are compositionally biased toward polar residues; it reads SSTAHASAQSSLA. Residues 185–210 are disordered; sequence SSTAHASAQSSLAGTRLPESEEELQC.

It belongs to the TPD52 family. In terms of assembly, forms a homodimer or heterodimer with other members of the family.

The chain is Tumor protein D53 homolog (TPD52L1) from Gallus gallus (Chicken).